The sequence spans 329 residues: Biotin--protein ligase 2 (329 aa).

Positions 67–251 (ISTHRFGRFL…KFENFFDLFM (185 aa)) constitute a BPL/LPL catalytic domain. Residues 84 to 85 (ST), glutamine 107, 111 to 113 (RGR), and lysine 182 contribute to the biotin site.

It belongs to the biotin--protein ligase family. In terms of tissue distribution, highly expressed in seeds. Expressed in roots, leaves, stems, flowers and siliques.

It is found in the cytoplasm. Its function is as follows. Seems to have no or limited implication in biotin-dependent carboxylase biotinylation in planta. The chain is Biotin--protein ligase 2 (HCS2) from Arabidopsis thaliana (Mouse-ear cress).